A 271-amino-acid polypeptide reads, in one-letter code: 4-hydroxy-tetrahydrodipicolinate reductase (271 aa).

NAD(+) is bound by residues 10-15 (GAGGRM), Glu36, 100-102 (GTT), and 124-127 (SGNM). His157 (proton donor/acceptor) is an active-site residue. A (S)-2,3,4,5-tetrahydrodipicolinate-binding site is contributed by His158. Lys161 (proton donor) is an active-site residue. 167–168 (GT) provides a ligand contact to (S)-2,3,4,5-tetrahydrodipicolinate.

It belongs to the DapB family.

The protein resides in the cytoplasm. The catalysed reaction is (S)-2,3,4,5-tetrahydrodipicolinate + NAD(+) + H2O = (2S,4S)-4-hydroxy-2,3,4,5-tetrahydrodipicolinate + NADH + H(+). It catalyses the reaction (S)-2,3,4,5-tetrahydrodipicolinate + NADP(+) + H2O = (2S,4S)-4-hydroxy-2,3,4,5-tetrahydrodipicolinate + NADPH + H(+). Its pathway is amino-acid biosynthesis; L-lysine biosynthesis via DAP pathway; (S)-tetrahydrodipicolinate from L-aspartate: step 4/4. Functionally, catalyzes the conversion of 4-hydroxy-tetrahydrodipicolinate (HTPA) to tetrahydrodipicolinate. The sequence is that of 4-hydroxy-tetrahydrodipicolinate reductase from Rhodopseudomonas palustris (strain BisB5).